A 65-amino-acid chain; its full sequence is Metallothionein-B (65 aa).

This sequence belongs to the metallothionein superfamily. Type 4 family.

Metallothioneins have a high content of cysteine residues that bind various heavy metals. The protein is Metallothionein-B (MTB1) of Strongylocentrotus purpuratus (Purple sea urchin).